A 32-amino-acid polypeptide reads, in one-letter code: Ranatuerin-2Lb (32 aa).

Residues C27 and C32 are joined by a disulfide bond.

In terms of tissue distribution, expressed by the skin glands.

Its subcellular location is the secreted. In terms of biological role, antibacterial activity against Gram-positive bacterium S.aureus and Gram-negative bacterium E.coli. Has activity against C.albicans. This Rana luteiventris (Columbia spotted frog) protein is Ranatuerin-2Lb.